Reading from the N-terminus, the 176-residue chain is Protein MAL2 (176 aa).

The Cytoplasmic portion of the chain corresponds to 1-34 (MSAGGASVPPPPNPAVSFPPPRVTLPAGPDILRT). The MARVEL domain maps to 31 to 175 (ILRTYSGAFV…SLGLALRRWR (145 aa)). A helical membrane pass occupies residues 35–55 (YSGAFVCLEILFGGLVWILVA). Topologically, residues 56–66 (SSNVPLPLLQG) are lumenal. The helical transmembrane segment at 67–87 (WVMFVSVTAFFFSLLFLGMFL) threads the bilayer. Topologically, residues 88–102 (SGMVAQIDANWNFLD) are cytoplasmic. Residues 103-123 (FAYHFTVFVFYFGAFLLEAAA) traverse the membrane as a helical segment. The Lumenal segment spans residues 124–149 (TSLHDLHCNTTITGQPLLSDNQYNIN). Asn-132 carries N-linked (GlcNAc...) asparagine glycosylation. A helical transmembrane segment spans residues 150 to 170 (VAASIFAFMTTACYGCSLGLA). Residues 171 to 176 (LRRWRP) lie on the Cytoplasmic side of the membrane.

Belongs to the MAL family. In terms of assembly, interacts with TPD52L2. Predominantly expressed in kidney, lung, and liver. Also found in thyroid gland, stomach and, at lower levels in testis and small intestine.

It is found in the cell membrane. The protein resides in the apical cell membrane. It localises to the endomembrane system. The protein localises to the cytoplasm. Its subcellular location is the perinuclear region. Member of the machinery of polarized transport. Required for the indirect transcytotic route at the step of the egress of the transcytosing cargo from perinuclear endosomes in order for it to travel to the apical surface via a raft-dependent pathway. The chain is Protein MAL2 (MAL2) from Homo sapiens (Human).